Reading from the N-terminus, the 556-residue chain is MLAMPRLITLSLCLFAPACLATCPNWDDARARQEIHQLQAQLAQWDDAYHRRGQSLVDDEIYDQSRAQLDGWRRCFVGTGAAPDPLQDAGGPLRHPVRQTGLVKLADEQAVATWIARRRDLWIQPKIDGVAVTLVYRHGALQQAISRGDGLTGHDWTANARRLAAIPARLAVPDEVILQGELYWRLDRHVQASHGSAGARGRVAGAMASNGLDRNTAARIGLFVWDWPNGPDSMNARLGQLAALGFPDTQAFSQPVETLEHARHWREHWYRQALPFATDGVVLRQEQRPPAERWQAEPHWAAAWKYPLRKALTEVRDVEFRIGRTGRITPLLQLAPVQLDDRRVRMLSLGSLDRWQALDVRPGDRVAVALAGHSIPQLDSVVWRHTERAPVAAPDPRRYHPDSCWRPAPGCEQQFLARLVWLGGRQGLALEGVGAGSWQALLEAGLLPDLLAWLELDAAALEQVPGIGKARANKLAASFARARQRPLAQWLKALGLPAKQLPPAADWDALAARDLAQWQAEAGVGPARAKQLQAFFRAAELPALRERLRAVGVPGT.

Lys126 (N6-AMP-lysine intermediate) is an active-site residue.

It belongs to the NAD-dependent DNA ligase family. LigB subfamily.

The catalysed reaction is NAD(+) + (deoxyribonucleotide)n-3'-hydroxyl + 5'-phospho-(deoxyribonucleotide)m = (deoxyribonucleotide)n+m + AMP + beta-nicotinamide D-nucleotide.. Its function is as follows. Catalyzes the formation of phosphodiester linkages between 5'-phosphoryl and 3'-hydroxyl groups in double-stranded DNA using NAD as a coenzyme and as the energy source for the reaction. The chain is DNA ligase B from Stutzerimonas stutzeri (strain A1501) (Pseudomonas stutzeri).